We begin with the raw amino-acid sequence, 584 residues long: Myo-inositol transporter 1 (584 aa).

The Cytoplasmic portion of the chain corresponds to 1 to 81 (MGIHIPYLTS…TSVMITFNQS (81 aa)). The residue at position 12 (Thr12) is a Phosphothreonine. The segment at 13 to 42 (SQSNVGDAVGNADSVEFNSEHDSPSKRGKI) is disordered. Phosphoserine occurs at positions 26, 31, 35, 37, and 46. Residues 30–42 (NSEHDSPSKRGKI) show a composition bias toward basic and acidic residues. The helical transmembrane segment at 82–102 (LSPFIITLTFVASISGFMFGY) threads the bilayer. The Extracellular segment spans residues 103–129 (DTGYISSALISIGTDLDHKVLTYGEKE). A helical membrane pass occupies residues 130-150 (IVTAATSLGALITSIFAGTAA). The Cytoplasmic portion of the chain corresponds to 151–163 (DIFGRKRCLMGSN). The helical transmembrane segment at 164–184 (LMFVIGAILQVSAHTFWQMAV) threads the bilayer. Residues 185–186 (GR) lie on the Extracellular side of the membrane. A helical transmembrane segment spans residues 187–207 (LIMGFGVGIGSLIAPLFISEI). Residues 208–215 (APKMIRGR) lie on the Cytoplasmic side of the membrane. The helical transmembrane segment at 216–236 (LTVINSLWLTGGQLVAYGCGA) threads the bilayer. At 237 to 246 (GLNYVNNGWR) the chain is on the extracellular side. Residues 247–267 (ILVGLSLIPTAVQFTCLCFLP) traverse the membrane as a helical segment. Residues 268-349 (DTPRYYVMKG…IGCGLQAIQQ (82 aa)) are Cytoplasmic-facing. A helical transmembrane segment spans residues 350–370 (FTGWNSLMYFSGTIFETVGFK). Asn371 is a glycosylation site (N-linked (GlcNAc...) asparagine). At 371-376 (NSSAVS) the chain is on the extracellular side. A helical transmembrane segment spans residues 377–397 (IIVSGTNFIFTLVAFFSIDKI). Topologically, residues 398-400 (GRR) are cytoplasmic. The chain crosses the membrane as a helical span at residues 401–421 (TILLIGLPGMTMALVVCSIAF). The Extracellular segment spans residues 422-441 (HFLGIKFDGAVAVVVSSGFS). A helical membrane pass occupies residues 442–462 (SWGIVIIVFIIVFAAFYALGI). Over 463–486 (GTVPWQQSELFPQNVRGIGTSYAT) the chain is Cytoplasmic. A helical membrane pass occupies residues 487–507 (ATNWAGSLVIASTFLTMLQNI). Residues 508–510 (TPA) are Extracellular-facing. A helical membrane pass occupies residues 511 to 531 (GTFAFFAGLSCLSTIFCYFCY). Residues 532 to 584 (PELSGLELEEVQTILKDGFNIKASKALAKKRKQQVARVHELKYEPTQEIIEDI) lie on the Cytoplasmic side of the membrane. Lys573 participates in a covalent cross-link: Glycyl lysine isopeptide (Lys-Gly) (interchain with G-Cter in ubiquitin).

Belongs to the major facilitator superfamily. Sugar transporter (TC 2.A.1.1) family.

It localises to the cell membrane. It catalyses the reaction myo-inositol(out) + H(+)(out) = myo-inositol(in) + H(+)(in). Major transporter for myo-inositol. This is Myo-inositol transporter 1 (ITR1) from Saccharomyces cerevisiae (strain ATCC 204508 / S288c) (Baker's yeast).